The sequence spans 189 residues: Peptidyl-tRNA hydrolase (189 aa).

Residue tyrosine 15 participates in tRNA binding. The active-site Proton acceptor is histidine 20. Positions 66, 68, and 114 each coordinate tRNA.

The protein belongs to the PTH family. In terms of assembly, monomer.

It is found in the cytoplasm. The catalysed reaction is an N-acyl-L-alpha-aminoacyl-tRNA + H2O = an N-acyl-L-amino acid + a tRNA + H(+). Hydrolyzes ribosome-free peptidyl-tRNAs (with 1 or more amino acids incorporated), which drop off the ribosome during protein synthesis, or as a result of ribosome stalling. Functionally, catalyzes the release of premature peptidyl moieties from peptidyl-tRNA molecules trapped in stalled 50S ribosomal subunits, and thus maintains levels of free tRNAs and 50S ribosomes. The chain is Peptidyl-tRNA hydrolase from Acidithiobacillus ferrooxidans (strain ATCC 23270 / DSM 14882 / CIP 104768 / NCIMB 8455) (Ferrobacillus ferrooxidans (strain ATCC 23270)).